The following is a 284-amino-acid chain: Peflin (284 aa).

The disordered stretch occupies residues 1–111; the sequence is MASYPYRQGC…QPGLYGQGGA (111 aa). Positions 8 to 26 are enriched in low complexity; that stretch reads QGCPGAAGQAPGAPPGSYY. 9 consecutive repeat copies span residues 21-29, 31-39, 41-49, 50-58, 59-67, 76-84, 85-92, 93-100, and 101-109. Residues 21-109 are 9 X 9 AA approximate tandem repeat of [AP]-P-G-G-P-Y-G-G-P-P; that stretch reads PPGSYYPGPP…AQQPGLYGQG (89 aa). The span at 34 to 50 shows a compositional bias: gly residues; sequence GQYGSGLPPGGGYGGPA. The segment covering 65 to 75 has biased composition (low complexity); that stretch reads GHPNPGMFPSG. Over residues 76 to 90 the composition is skewed to gly residues; it reads TPGGPYGGAAPGGPY. EF-hand domains are found at residues 114 to 149, 155 to 183, 181 to 216, 217 to 253, and 254 to 283; these read NVDP…CNWS, TCLM…WKFI, KFIQ…MGYN, LSPQ…LQVL, and TEAF…ASRM. Ca(2+) is bound by residues D127, D129, S131, and Y133. Residue K137 forms a Glycyl lysine isopeptide (Lys-Gly) (interchain with G-Cter in ubiquitin) linkage. E138 provides a ligand contact to Ca(2+). Ca(2+) contacts are provided by D194, D196, S198, S200, and E205. Residues 204 to 284 are required for interaction with PDCD6; the sequence is TELQQALSQM…FVTMTASRML (81 aa).

In terms of assembly, heterodimer; heterodimerizes (via the EF-hand 5) with PDCD6. Dissociates from PDCD6 in presence of calcium. Ubiquitinated by the BCR(KLHL12) E3 ubiquitin ligase complex.

The protein resides in the cytoplasm. It localises to the endoplasmic reticulum. The protein localises to the membrane. It is found in the cytoplasmic vesicle. Its subcellular location is the COPII-coated vesicle membrane. Its function is as follows. Calcium-binding protein that acts as an adapter that bridges unrelated proteins or stabilizes weak protein-protein complexes in response to calcium. Together with PDCD6, acts as a calcium-dependent adapter for the BCR(KLHL12) complex, a complex involved in endoplasmic reticulum (ER)-Golgi transport by regulating the size of COPII coats. In response to cytosolic calcium increase, the heterodimer formed with PDCD6 interacts with, and bridges together the BCR(KLHL12) complex and SEC31 (SEC31A or SEC31B), promoting monoubiquitination of SEC31 and subsequent collagen export, which is required for neural crest specification. Its role in the heterodimer formed with PDCD6 is however unclear: some evidence shows that PEF1 and PDCD6 work together and promote association between PDCD6 and SEC31 in presence of calcium. Other reports show that PEF1 dissociates from PDCD6 in presence of calcium, and may act as a negative regulator of PDCD6. Also acts as a negative regulator of ER-Golgi transport; possibly by inhibiting interaction between PDCD6 and SEC31. This chain is Peflin, found in Homo sapiens (Human).